Consider the following 247-residue polypeptide: Probable transcriptional regulatory protein Tola_2714 (247 aa).

Residues 1–21 (MAGHSKWANIKHRKAAQDAKR) are disordered.

The protein belongs to the TACO1 family.

It localises to the cytoplasm. This is Probable transcriptional regulatory protein Tola_2714 from Tolumonas auensis (strain DSM 9187 / NBRC 110442 / TA 4).